A 244-amino-acid chain; its full sequence is tRNA1(Val) (adenine(37)-N6)-methyltransferase (244 aa).

It belongs to the methyltransferase superfamily. tRNA (adenine-N(6)-)-methyltransferase family.

The protein localises to the cytoplasm. It carries out the reaction adenosine(37) in tRNA1(Val) + S-adenosyl-L-methionine = N(6)-methyladenosine(37) in tRNA1(Val) + S-adenosyl-L-homocysteine + H(+). Its function is as follows. Specifically methylates the adenine in position 37 of tRNA(1)(Val) (anticodon cmo5UAC). This is tRNA1(Val) (adenine(37)-N6)-methyltransferase from Photorhabdus laumondii subsp. laumondii (strain DSM 15139 / CIP 105565 / TT01) (Photorhabdus luminescens subsp. laumondii).